Consider the following 689-residue polypeptide: tRNA 5-methylaminomethyl-2-thiouridine biosynthesis bifunctional protein MnmC (689 aa).

Residues 1–245 (MNQRPIQTAT…KREMLTGTLP (245 aa)) are tRNA (mnm(5)s(2)U34)-methyltransferase. Positions 270–689 (IGGGIVSALT…RSPATQESSR (420 aa)) are FAD-dependent cmnm(5)s(2)U34 oxidoreductase.

The protein in the N-terminal section; belongs to the methyltransferase superfamily. tRNA (mnm(5)s(2)U34)-methyltransferase family. It in the C-terminal section; belongs to the DAO family. FAD serves as cofactor.

It is found in the cytoplasm. It catalyses the reaction 5-aminomethyl-2-thiouridine(34) in tRNA + S-adenosyl-L-methionine = 5-methylaminomethyl-2-thiouridine(34) in tRNA + S-adenosyl-L-homocysteine + H(+). In terms of biological role, catalyzes the last two steps in the biosynthesis of 5-methylaminomethyl-2-thiouridine (mnm(5)s(2)U) at the wobble position (U34) in tRNA. Catalyzes the FAD-dependent demodification of cmnm(5)s(2)U34 to nm(5)s(2)U34, followed by the transfer of a methyl group from S-adenosyl-L-methionine to nm(5)s(2)U34, to form mnm(5)s(2)U34. The polypeptide is tRNA 5-methylaminomethyl-2-thiouridine biosynthesis bifunctional protein MnmC (Yersinia pseudotuberculosis serotype I (strain IP32953)).